Here is a 378-residue protein sequence, read N- to C-terminus: Glutamate 5-kinase (378 aa).

Lys-19 is a binding site for ATP. Positions 59, 146, and 158 each coordinate substrate. An ATP-binding site is contributed by 178–179 (TD). One can recognise a PUA domain in the interval 285–363 (RGSVTVDPGA…SEFEKLLGYT (79 aa)).

The protein belongs to the glutamate 5-kinase family.

It is found in the cytoplasm. The catalysed reaction is L-glutamate + ATP = L-glutamyl 5-phosphate + ADP. The protein operates within amino-acid biosynthesis; L-proline biosynthesis; L-glutamate 5-semialdehyde from L-glutamate: step 1/2. Functionally, catalyzes the transfer of a phosphate group to glutamate to form L-glutamate 5-phosphate. This chain is Glutamate 5-kinase, found in Polaromonas naphthalenivorans (strain CJ2).